The following is a 381-amino-acid chain: MKPQTRNTVVRMDPDTFFYNFYNRPILSHRNTVWLCYEVKMKTNDPSRPPLVANIFQGQVSFNPEHHAEMYFLSWFRGNLLPACKRSQITWFVSWNPCLYCVAKVAEFLAEHPKVTLTVSTARLYCYRKKDWRRALRKLSQTGARVKIMDYEEFQHCWDNFVDNQREPFEPWNALPKHYTLLRITLGEVLRHRMDPVTFTYNFTNDPSVLGQHQSYLCYKVEHLRNGTWVPLHQHRGFILNEASNSVSFPEGRHAELCLLDLISFWKLKQAQRYRVTCFISWSPCFSCAEKVAEFLQENPHVNLHISAARIYDYQRGYKKGLRRLDRAGTPISMMKYSEFKHCWDTFVDHQGHPFQPWEELNEHSQALSGRLQAILQNQGN.

Residues 1–62 are essential for cytoplasmic localization; sequence MKPQTRNTVV…ANIFQGQVSF (62 aa). CMP/dCMP-type deaminase domains are found at residues 29–143 and 211–325; these read HRNT…SQTG and GQHQ…LRRL. Residue threonine 32 is modified to Phosphothreonine; by PKA. Zn(2+) contacts are provided by histidine 67, cysteine 98, and cysteine 101. The segment at 206-333 is necessary for homooligomerization; that stretch reads DPSVLGQHQS…RLDRAGTPIS (128 aa). The interaction with DNA stretch occupies residues 210–212; it reads LGQ. Histidine 254 provides a ligand contact to Zn(2+). The active-site Proton donor is glutamate 256. Residues cysteine 285 and cysteine 288 each contribute to the Zn(2+) site. The interaction with DNA stretch occupies residues 310-317; the sequence is RIYDYQRG.

It belongs to the cytidine and deoxycytidylate deaminase family. Homodimer. Homooligomer. Can bind RNA to form ribonucleoprotein complexes of high-molecular-mass (HMM) or low-molecular-mass (LMM). HMM is inactive and heterogeneous in protein composition because of binding nonselectively to cellular RNAs, which in turn are associated with variety of cellular proteins. The LMM form which is enzymatically active has few or no RNAs associated. Its ability to form homooligomer is distinct from its ability to assemble into HMM. Interacts with APOBEC3B, APOBEC3F, MOV10, AGO2, EIF4E, EIF4ENIF1, DCP2 and DDX6 in an RNA-dependent manner. Interacts with AGO1, AGO3 and PKA/PRKACA. Requires Zn(2+) as cofactor.

The protein resides in the cytoplasm. It is found in the nucleus. It localises to the P-body. It catalyses the reaction a 2'-deoxycytidine in single-stranded DNA + H2O + H(+) = a 2'-deoxyuridine in single-stranded DNA + NH4(+). Functionally, DNA deaminase (cytidine deaminase) which acts as an inhibitor of retrovirus replication and retrotransposon mobility. After the penetration of retroviral nucleocapsids into target cells of infection and the initiation of reverse transcription, it can induce the conversion of cytosine to uracil in the minus-sense single-strand viral DNA, leading to G-to-A hypermutations in the subsequent plus-strand viral DNA. The resultant detrimental levels of mutations in the proviral genome, along with a deamination-independent mechanism that works prior to the proviral integration, together exert efficient antiretroviral effects in infected target cells. Selectively targets single-stranded DNA and does not deaminate double-stranded DNA or single- or double-stranded RNA. This is DNA dC-&gt;dU-editing enzyme APOBEC-3G (APOBEC3G) from Lagothrix lagotricha (Brown woolly monkey).